The sequence spans 288 residues: 4-diphosphocytidyl-2-C-methyl-D-erythritol kinase (288 aa).

Residue K10 is part of the active site. 94-104 (PVAAGLGGGSS) is a binding site for ATP. D136 is a catalytic residue.

It belongs to the GHMP kinase family. IspE subfamily.

It carries out the reaction 4-CDP-2-C-methyl-D-erythritol + ATP = 4-CDP-2-C-methyl-D-erythritol 2-phosphate + ADP + H(+). It functions in the pathway isoprenoid biosynthesis; isopentenyl diphosphate biosynthesis via DXP pathway; isopentenyl diphosphate from 1-deoxy-D-xylulose 5-phosphate: step 3/6. In terms of biological role, catalyzes the phosphorylation of the position 2 hydroxy group of 4-diphosphocytidyl-2C-methyl-D-erythritol. This is 4-diphosphocytidyl-2-C-methyl-D-erythritol kinase from Lactiplantibacillus plantarum (strain ATCC BAA-793 / NCIMB 8826 / WCFS1) (Lactobacillus plantarum).